Here is a 529-residue protein sequence, read N- to C-terminus: Bifunctional purine biosynthesis protein PurH (529 aa).

An MGS-like domain is found at 2 to 149 (TDLSPVRRAL…KNHAFVNVVV (148 aa)).

Belongs to the PurH family.

It catalyses the reaction (6R)-10-formyltetrahydrofolate + 5-amino-1-(5-phospho-beta-D-ribosyl)imidazole-4-carboxamide = 5-formamido-1-(5-phospho-D-ribosyl)imidazole-4-carboxamide + (6S)-5,6,7,8-tetrahydrofolate. The enzyme catalyses IMP + H2O = 5-formamido-1-(5-phospho-D-ribosyl)imidazole-4-carboxamide. The protein operates within purine metabolism; IMP biosynthesis via de novo pathway; 5-formamido-1-(5-phospho-D-ribosyl)imidazole-4-carboxamide from 5-amino-1-(5-phospho-D-ribosyl)imidazole-4-carboxamide (10-formyl THF route): step 1/1. Its pathway is purine metabolism; IMP biosynthesis via de novo pathway; IMP from 5-formamido-1-(5-phospho-D-ribosyl)imidazole-4-carboxamide: step 1/1. The chain is Bifunctional purine biosynthesis protein PurH from Ruegeria pomeroyi (strain ATCC 700808 / DSM 15171 / DSS-3) (Silicibacter pomeroyi).